Here is a 245-residue protein sequence, read N- to C-terminus: Derlin-1 (245 aa).

The Cytoplasmic portion of the chain corresponds to 1 to 17 (MDAGVWYRSLPRFTRYW). Residues 18-38 (LTATVVLSMLCRFDVIPLHWL) traverse the membrane as a helical segment. At 39–58 (HLDRSAVFSKLQLWRCMTSL) the chain is on the lumenal side. The chain crosses the membrane as a helical span at residues 59 to 79 (FVFPISSNTAFHFLINCFFIV). Over 80–99 (QYSSKLEKDQYSRSPADYLY) the chain is Cytoplasmic. Residues 100–120 (LLIVSAVLANIGGMIFNVYFL) form a helical membrane-spanning segment. Residues 121–156 (MDTLVLAITYIWCQLNKDVTVSFWFGTRFKAMYLPW) are Lumenal-facing. A helical transmembrane segment spans residues 157–177 (VLAAFEFIFHFSLASLVGIFV). Residues 178 to 245 (GHVYYFFKFQ…WGRGMTLGRN (68 aa)) lie on the Cytoplasmic side of the membrane. The interval 218–245 (FGLPPESRAPPRQATESPWGRGMTLGRN) is disordered.

The protein belongs to the derlin family.

It is found in the endoplasmic reticulum membrane. In terms of biological role, may be involved in the degradation process of specific misfolded endoplasmic reticulum (ER) luminal proteins. May also involved in endoplasmic reticulum stress-induced pre-emptive quality control, a mechanism that selectively attenuates the translocation of newly synthesized proteins into the endoplasmic reticulum and reroutes them to the cytosol for proteasomal degradation. The chain is Derlin-1 from Drosophila melanogaster (Fruit fly).